Reading from the N-terminus, the 916-residue chain is Protein translocase subunit SecA (916 aa).

ATP contacts are provided by residues glutamine 87, 105-109 (GEGKT), and aspartate 507. The Zn(2+) site is built by cysteine 900, cysteine 902, cysteine 911, and histidine 912.

It belongs to the SecA family. In terms of assembly, monomer and homodimer. Part of the essential Sec protein translocation apparatus which comprises SecA, SecYEG and auxiliary proteins SecDF-YajC and YidC. The cofactor is Zn(2+).

Its subcellular location is the cell inner membrane. The protein resides in the cytoplasm. The enzyme catalyses ATP + H2O + cellular proteinSide 1 = ADP + phosphate + cellular proteinSide 2.. Functionally, part of the Sec protein translocase complex. Interacts with the SecYEG preprotein conducting channel. Has a central role in coupling the hydrolysis of ATP to the transfer of proteins into and across the cell membrane, serving both as a receptor for the preprotein-SecB complex and as an ATP-driven molecular motor driving the stepwise translocation of polypeptide chains across the membrane. The protein is Protein translocase subunit SecA of Neisseria gonorrhoeae (strain NCCP11945).